The sequence spans 458 residues: Cysteine protease ATG4C (458 aa).

Met-1 is modified (N-acetylmethionine). The active-site Nucleophile is the Cys-111. Active-site residues include Asp-345 and His-347. Position 451 is a phosphoserine (Ser-451). Thr-452 is modified (phosphothreonine).

The protein belongs to the peptidase C54 family.

It is found in the cytoplasm. The catalysed reaction is [protein]-C-terminal L-amino acid-glycyl-phosphatidylethanolamide + H2O = [protein]-C-terminal L-amino acid-glycine + a 1,2-diacyl-sn-glycero-3-phosphoethanolamine. Inhibited by N-ethylmaleimide. Its function is as follows. Cysteine protease that plays a key role in autophagy by mediating both proteolytic activation and delipidation of ATG8 family proteins. The protease activity is required for proteolytic activation of ATG8 family proteins: cleaves the C-terminal amino acid of ATG8 proteins MAP1LC3 and GABARAPL2, to reveal a C-terminal glycine. Exposure of the glycine at the C-terminus is essential for ATG8 proteins conjugation to phosphatidylethanolamine (PE) and insertion to membranes, which is necessary for autophagy. In addition to the protease activity, also mediates delipidation of ATG8 family proteins. Catalyzes delipidation of PE-conjugated forms of ATG8 proteins during macroautophagy. Compared to ATG4B, the major protein for proteolytic activation of ATG8 proteins, shows weaker ability to cleave the C-terminal amino acid of ATG8 proteins, while it displays stronger delipidation activity. In contrast to other members of the family, weakly or not involved in phagophore growth during mitophagy. The polypeptide is Cysteine protease ATG4C (Mus musculus (Mouse)).